A 65-amino-acid chain; its full sequence is Large ribosomal subunit protein bL35 (65 aa).

It belongs to the bacterial ribosomal protein bL35 family.

The sequence is that of Large ribosomal subunit protein bL35 from Wolbachia sp. subsp. Brugia malayi (strain TRS).